The chain runs to 183 residues: Dual-action ribosomal maturation protein DarP (183 aa).

Belongs to the DarP family.

Its subcellular location is the cytoplasm. Its function is as follows. Member of a network of 50S ribosomal subunit biogenesis factors which assembles along the 30S-50S interface, preventing incorrect 23S rRNA structures from forming. Promotes peptidyl transferase center (PTC) maturation. This is Dual-action ribosomal maturation protein DarP from Shigella boydii serotype 18 (strain CDC 3083-94 / BS512).